The chain runs to 257 residues: Large ribosomal subunit protein uL2 (257 aa).

The tract at residues 207–226 is disordered; the sequence is VEHPFGGGNHQHIGKPSTIR.

This sequence belongs to the universal ribosomal protein uL2 family. As to quaternary structure, component of the large ribosomal subunit.

It localises to the cytoplasm. Its function is as follows. Component of the large ribosomal subunit. The ribosome is a large ribonucleoprotein complex responsible for the synthesis of proteins in the cell. This is Large ribosomal subunit protein uL2 (rpl8) from Ictalurus punctatus (Channel catfish).